A 270-amino-acid polypeptide reads, in one-letter code: MATYAIGDIQGCYEPLQCLLEKIDFDTAKDKLWLVGDLINRGPDSLATLRFLYSIRSSLEVVLGNHDLHLLAVYFGLRKQNKSDTLTPILEAPDAPELIHWLRQQKLMHHDATLGYALVHAGIPPIWSLDKALACAREVEDYLRGPDFKTFLAHMYGNQPSVWDDSLQGQERLRLITNYFTRMRFCSADGELELTTKENAAAAPPGFAPWFSFMQRKTRQDRILFGHWAALEGQVSTANVYALDTGCVWGGYLTAMCLETGALVQCACEA.

It belongs to the Ap4A hydrolase family.

It carries out the reaction P(1),P(4)-bis(5'-adenosyl) tetraphosphate + H2O = 2 ADP + 2 H(+). Hydrolyzes diadenosine 5',5'''-P1,P4-tetraphosphate to yield ADP. In Cellvibrio japonicus (strain Ueda107) (Pseudomonas fluorescens subsp. cellulosa), this protein is Bis(5'-nucleosyl)-tetraphosphatase, symmetrical.